A 420-amino-acid chain; its full sequence is Tryptophan synthase beta chain (420 aa).

Position 99 is an N6-(pyridoxal phosphate)lysine (Lys-99).

This sequence belongs to the TrpB family. In terms of assembly, tetramer of two alpha and two beta chains. Pyridoxal 5'-phosphate is required as a cofactor.

It catalyses the reaction (1S,2R)-1-C-(indol-3-yl)glycerol 3-phosphate + L-serine = D-glyceraldehyde 3-phosphate + L-tryptophan + H2O. It participates in amino-acid biosynthesis; L-tryptophan biosynthesis; L-tryptophan from chorismate: step 5/5. In terms of biological role, the beta subunit is responsible for the synthesis of L-tryptophan from indole and L-serine. The chain is Tryptophan synthase beta chain from Helicobacter hepaticus (strain ATCC 51449 / 3B1).